The sequence spans 479 residues: Bifunctional NAD(P)H-hydrate repair enzyme Nnr (479 aa).

Residues 1–214 (MTVIIQGRSF…GIGIPLLAEI (214 aa)) form an NAD(P)H-hydrate epimerase region. The 184-residue stretch at 31–214 (MRRIDQNAQA…GIGIPLLAEI (184 aa)) folds into the YjeF N-terminal domain. An NADPHX 1; for epimerase activity region spans residues 76-80 (NNGGD). Residues Asn77 and Asp146 each coordinate K(+). The tract at residues 150–156 (GTGGTGS) is NADPHX 1; for epimerase activity. Asp179 lines the (6S)-NADPHX pocket. Ser182 is a binding site for K(+). The YjeF C-terminal domain occupies 216–474 (TGPGDLLILR…TAVPQVLFRS (259 aa)). Residues 216-479 (TGPGDLLILR…VLFRSTSERE (264 aa)) are ADP-dependent (S)-NAD(P)H-hydrate dehydratase. Gly312 serves as a coordination point for (6S)-NADPHX. Residues 353-359 (HAGEFAR) form an NADPHX 2; for dehydratase activity region. ADP-binding positions include 388 to 392 (KGAVD) and 407 to 416 (TPAMTTGGTG). Asp417 provides a ligand contact to (6S)-NADPHX.

The protein in the N-terminal section; belongs to the NnrE/AIBP family. In the C-terminal section; belongs to the NnrD/CARKD family. The cofactor is K(+).

The enzyme catalyses (6S)-NADHX + ADP = AMP + phosphate + NADH + H(+). The catalysed reaction is (6S)-NADPHX + ADP = AMP + phosphate + NADPH + H(+). It catalyses the reaction (6R)-NADHX = (6S)-NADHX. It carries out the reaction (6R)-NADPHX = (6S)-NADPHX. Its function is as follows. Bifunctional enzyme that catalyzes the epimerization of the S- and R-forms of NAD(P)HX and the dehydration of the S-form of NAD(P)HX at the expense of ADP, which is converted to AMP. This allows the repair of both epimers of NAD(P)HX, a damaged form of NAD(P)H that is a result of enzymatic or heat-dependent hydration. The polypeptide is Bifunctional NAD(P)H-hydrate repair enzyme Nnr (nnr) (Methanospirillum hungatei JF-1 (strain ATCC 27890 / DSM 864 / NBRC 100397 / JF-1)).